Consider the following 1080-residue polypeptide: Headcase protein (1080 aa).

Disordered regions lie at residues 1-27 (MAPRRNSNISSSGNSTQQQHQQQLQQQ), 181-277 (IYLN…GNNG), 310-335 (SLSSSGAGSGSTSPSDSQSSGEISVS), 655-693 (PLESPVGTGATTTQVPNAQGSPTASGCSSNTIASKQPPK), 798-826 (SKYQQQQHQQQQQQRQQQHNLQPQQQHAT), 891-916 (SGCSSGSGSQPSLSPTASSNGNDGSK), and 940-974 (QRQQPPQQQVPQQQPHAASPTASLTSSSSSSNGWS). Over residues 181–197 (IYLNGSGNRPTLANGSL) the composition is skewed to polar residues. Positions 218–228 (NGGGGGGGAGV) are enriched in gly residues. Positions 232–251 (TKTPLSNNNGNSYAGLTPNP) are enriched in polar residues. The span at 263–277 (NNGNTASNGSSGNNG) shows a compositional bias: low complexity. Residues 663–688 (GATTTQVPNAQGSPTASGCSSNTIAS) are compositionally biased toward polar residues. Over residues 801-826 (QQQQHQQQQQQRQQQHNLQPQQQHAT) the composition is skewed to low complexity. Polar residues predominate over residues 900 to 913 (QPSLSPTASSNGND). A compositionally biased stretch (low complexity) spans 941–974 (RQQPPQQQVPQQQPHAASPTASLTSSSSSSNGWS).

Expressed in all imaginal cells of the embryo and larvae. Expressed in a subset of tracheal fusion cells from stage 14 to the end of embryogenesis in metameres 2-9, lateral trunk and ventral anastomoses.

Its subcellular location is the cytoplasm. Functionally, required for imaginal cell differentiation, may be involved in hormonal responsiveness during metamorphosis. Involved in an inhibitory signaling mechanism to determine the number of cells that will form unicellular sprouts in the trachea. Regulated by transcription factor esg. The longer hdc protein is completely functional and the shorter protein carries some function. The sequence is that of Headcase protein from Drosophila melanogaster (Fruit fly).